The primary structure comprises 126 residues: Large ribosomal subunit protein bL17 (126 aa).

This sequence belongs to the bacterial ribosomal protein bL17 family. As to quaternary structure, part of the 50S ribosomal subunit. Contacts protein L32.

The chain is Large ribosomal subunit protein bL17 from Limosilactobacillus fermentum (strain NBRC 3956 / LMG 18251) (Lactobacillus fermentum).